The primary structure comprises 76 residues: NADH-ubiquinone oxidoreductase chain 4L (76 aa).

3 consecutive transmembrane segments (helical) span residues 1–21, 29–49, and 56–76; these read MTPVHFSFTSAFILGLMGLAF, ALLCLEGMMLSLFIALSLWAL, and YSVAPMLLLAFSACEASAGLA.

This sequence belongs to the complex I subunit 4L family.

It is found in the mitochondrion membrane. It carries out the reaction a ubiquinone + NADH + 5 H(+)(in) = a ubiquinol + NAD(+) + 4 H(+)(out). Its function is as follows. Core subunit of the mitochondrial membrane respiratory chain NADH dehydrogenase (Complex I) which catalyzes electron transfer from NADH through the respiratory chain, using ubiquinone as an electron acceptor. Part of the enzyme membrane arm which is embedded in the lipid bilayer and involved in proton translocation. This chain is NADH-ubiquinone oxidoreductase chain 4L (MT-ND4L), found in Oncorhynchus masou (Cherry salmon).